The following is a 157-amino-acid chain: Small ribosomal subunit protein uS13 (157 aa).

It belongs to the universal ribosomal protein uS13 family. Part of the 30S ribosomal subunit. Forms a loose heterodimer with protein S19. Forms two bridges to the 50S subunit in the 70S ribosome.

Its function is as follows. Located at the top of the head of the 30S subunit, it contacts several helices of the 16S rRNA. In the 70S ribosome it contacts the 23S rRNA (bridge B1a) and protein L5 of the 50S subunit (bridge B1b), connecting the 2 subunits; these bridges are implicated in subunit movement. The polypeptide is Small ribosomal subunit protein uS13 (Thermofilum pendens (strain DSM 2475 / Hrk 5)).